Consider the following 141-residue polypeptide: Hemoglobin subunit alpha-D (141 aa).

A Globin domain is found at 1–141 (VLTAEDKKLI…VAAVLAEKYR (141 aa)). The heme b site is built by H58 and H87.

It belongs to the globin family. Heterotetramer of two alpha-D chains and two beta chains. In terms of tissue distribution, red blood cells.

Its function is as follows. Involved in oxygen transport from the lung to the various peripheral tissues. This chain is Hemoglobin subunit alpha-D (HBAD), found in Sturnus vulgaris (Starling).